We begin with the raw amino-acid sequence, 481 residues long: Uridine 5'-monophosphate synthase (481 aa).

The tract at residues 1–214 (MEVASQALGP…VFSAANHNGL (214 aa)) is OPRTase. Y37 carries the post-translational modification Phosphotyrosine. The domain linker stretch occupies residues 215–220 (PPPEKK). Positions 221-481 (ACKELSFGAR…EAYLSRLAVQ (261 aa)) are OMPdecase. Position 257 (S257) interacts with orotidine 5'-phosphate. Residues S257, D259, and 281–283 (KTH) each bind UMP. Orotidine 5'-phosphate contacts are provided by residues K281, K314, D317, T321, S372, 430–432 (QQY), and 450–451 (GR). Active-site for OMPdecase activity residues include K314 and D317. Residues D317, T321, S372, 430–432 (QQY), and 450–451 (GR) each bind UMP.

It in the N-terminal section; belongs to the purine/pyrimidine phosphoribosyltransferase family. In the C-terminal section; belongs to the OMP decarboxylase family. Homodimer; dimerization is required for enzymatic activity.

The enzyme catalyses orotidine 5'-phosphate + diphosphate = orotate + 5-phospho-alpha-D-ribose 1-diphosphate. The catalysed reaction is orotidine 5'-phosphate + H(+) = UMP + CO2. It participates in pyrimidine metabolism; UMP biosynthesis via de novo pathway; UMP from orotate: step 1/2. Its pathway is pyrimidine metabolism; UMP biosynthesis via de novo pathway; UMP from orotate: step 2/2. Bifunctional enzyme catalyzing the last two steps of de novo pyrimidine biosynthesis, orotate phosphoribosyltransferase (OPRT), which converts orotate to orotidine-5'-monophosphate (OMP), and orotidine-5'-monophosphate decarboxylase (ODC), the terminal enzymatic reaction that decarboxylates OMP to uridine monophosphate (UMP). The polypeptide is Uridine 5'-monophosphate synthase (Umps) (Mus musculus (Mouse)).